We begin with the raw amino-acid sequence, 149 residues long: Transcriptional repressor NrdR (149 aa).

A zinc finger lies at 3–34 (CPFCSATDTKVIDSRLVADGHQVRRRRECVQC). One can recognise an ATP-cone domain in the interval 49 to 139 (PRVVKQDGSR…VYRAFEDVSE (91 aa)).

Belongs to the NrdR family. It depends on Zn(2+) as a cofactor.

Negatively regulates transcription of bacterial ribonucleotide reductase nrd genes and operons by binding to NrdR-boxes. The chain is Transcriptional repressor NrdR from Shewanella halifaxensis (strain HAW-EB4).